The chain runs to 355 residues: Probable butyrate kinase (355 aa).

Belongs to the acetokinase family.

The protein localises to the cytoplasm. It catalyses the reaction butanoate + ATP = butanoyl phosphate + ADP. This chain is Probable butyrate kinase, found in Listeria monocytogenes serovar 1/2a (strain ATCC BAA-679 / EGD-e).